The sequence spans 257 residues: THAP domain-containing protein 10 (257 aa).

Residues 1 to 90 form a THAP-type zinc finger; that stretch reads MPARCVAAHC…LVAGAVPTLH (90 aa). The span at 154-168 shows a compositional bias: polar residues; the sequence is QPHADNPSNTVTSVP. A disordered region spans residues 154–178; it reads QPHADNPSNTVTSVPTHCEEGPVHK.

This chain is THAP domain-containing protein 10 (THAP10), found in Homo sapiens (Human).